A 584-amino-acid chain; its full sequence is Lamin-B1 (584 aa).

Residues 1–22 are disordered; that stretch reads MAAAVAPLSPQPRGAAASAALS. Residues 2-33 form a head region; the sequence is AAAVAPLSPQPRGAAASAALSPTRISRLQEKE. Ser-22 is modified (phosphoserine). An IF rod domain is found at 31-387; it reads EKEELRQLND…KLLESEEERL (357 aa). Positions 34-70 are coil 1A; that stretch reads ELRQLNDRLAVYIDKVRSLETENSALQRRVSEREQVC. A coil 1B region spans residues 81–218; it reads FETELADARK…NVYEEEIKET (138 aa). Residues 243-385 form a coil 2 region; it reads QALKEIREQH…YRKLLESEEE (143 aa). Residues 386–584 are tail; it reads RLRLSPGPSS…RKPERSCVVM (199 aa). 2 disordered regions span residues 388–431 and 548–584; these read RLSP…SVSI and TVNE…CVVM. Over residues 394–408 the composition is skewed to low complexity; it reads SSRVTVSRASSSRSV. A Nuclear localization signal motif is present at residues 414 to 419; it reads KRKRID. In terms of domain architecture, LTD spans 429-545; it reads VSISHSASAT…EEVAQRSTVF (117 aa). Acidic residues predominate over residues 551-565; that stretch reads EGEEEEEEGEEEILE. A compositionally biased stretch (basic and acidic residues) spans 575-584; it reads RKPERSCVVM. At Cys-581 the chain carries Cysteine methyl ester. Cys-581 is lipidated: S-farnesyl cysteine. Residues 582 to 584 constitute a propeptide, removed in mature form; the sequence is VVM.

This sequence belongs to the intermediate filament family. As to quaternary structure, homodimer. Lamin dimers then assemble into dimeric head-to-tail polymers. Ultimately, two head-to-tail polymers assemble laterally into a protofilament with a uniformly shaped rod of 3.5 nm in diameter. Post-translationally, phosphorylation plays a key role in lamin organization, subcellular localization and nuclear envelope disintegration. Phosphorylation by CDK1 at Ser-22 at the onset of mitosis drives lamin disassembly and nuclear envelope breakdown.

It localises to the nucleus lamina. It is found in the nucleus envelope. The protein localises to the nucleus. Its subcellular location is the nucleoplasm. The protein resides in the nucleus matrix. Its function is as follows. Lamins are intermediate filament proteins that assemble into a filamentous meshwork, and which constitute the major components of the nuclear lamina, a fibrous layer on the nucleoplasmic side of the inner nuclear membrane. Lamins provide a framework for the nuclear envelope, bridging the nuclear envelope and chromatin. Plays an important role in nuclear assembly, chromatin organization, nuclear membrane and telomere dynamics. The polypeptide is Lamin-B1 (LMNB1) (Gallus gallus (Chicken)).